Here is a 217-residue protein sequence, read N- to C-terminus: Adapter protein MecA (217 aa).

This sequence belongs to the MecA family. As to quaternary structure, homodimer.

Enables the recognition and targeting of unfolded and aggregated proteins to the ClpC protease or to other proteins involved in proteolysis. This chain is Adapter protein MecA, found in Listeria welshimeri serovar 6b (strain ATCC 35897 / DSM 20650 / CCUG 15529 / CIP 8149 / NCTC 11857 / SLCC 5334 / V8).